The following is a 266-amino-acid chain: Hydroxyacylglutathione hydrolase (266 aa).

Positions 53, 55, 57, 58, 118, 140, and 178 each coordinate Zn(2+).

This sequence belongs to the metallo-beta-lactamase superfamily. Glyoxalase II family. Monomer. Zn(2+) is required as a cofactor.

The enzyme catalyses an S-(2-hydroxyacyl)glutathione + H2O = a 2-hydroxy carboxylate + glutathione + H(+). The protein operates within secondary metabolite metabolism; methylglyoxal degradation; (R)-lactate from methylglyoxal: step 2/2. In terms of biological role, thiolesterase that catalyzes the hydrolysis of S-D-lactoyl-glutathione to form glutathione and D-lactic acid. The polypeptide is Hydroxyacylglutathione hydrolase (Cupriavidus taiwanensis (strain DSM 17343 / BCRC 17206 / CCUG 44338 / CIP 107171 / LMG 19424 / R1) (Ralstonia taiwanensis (strain LMG 19424))).